Here is a 98-residue protein sequence, read N- to C-terminus: Cuticle protein 67, isoform A (98 aa).

6 consecutive repeat copies span residues 7–10 (AAPA), 15–18 (AAPA), 22–25 (AAPA), 79–82 (AAPA), 86–89 (AAPA), and 92–95 (AAPA).

Component of the cuticle of migratory locust which contains more than 100 different structural proteins. This Locusta migratoria (Migratory locust) protein is Cuticle protein 67, isoform A.